The sequence spans 293 residues: Probable E3 ubiquitin-protein ligase RNF144A-A (293 aa).

The TRIAD supradomain stretch occupies residues 16 to 237; sequence PLVSCKLCLG…YDKGPCRNKL (222 aa). Positions 20, 23, 43, 46, 111, 116, 135, 138, 143, 146, 151, 156, 186, and 189 each coordinate Zn(2+). An RING-type 1 zinc finger spans residues 20–70; it reads CKLCLGEFPLEQMTTITQCQCVFCTMCLKQYVELLIKEGFETAISCPDSAC. An IBR-type zinc finger spans residues 91–156; sequence QRYRKLQFEK…KASWHPDQDC (66 aa). The segment at 186–215 adopts an RING-type 2; atypical zinc-finger fold; it reads CPKCKVYIERDEGCAQMMCKNCKHAFCWYC. C199 is a catalytic residue. Residues C204, C207, C212, C215, H227, and C233 each coordinate Zn(2+). Residues 251-271 traverse the membrane as a helical segment; it reads VVGIFAGFGLLLLVASPFLLL.

It belongs to the RBR family. RNF144 subfamily.

The protein localises to the membrane. It carries out the reaction [E2 ubiquitin-conjugating enzyme]-S-ubiquitinyl-L-cysteine + [acceptor protein]-L-lysine = [E2 ubiquitin-conjugating enzyme]-L-cysteine + [acceptor protein]-N(6)-ubiquitinyl-L-lysine.. It functions in the pathway protein modification; protein ubiquitination. Its function is as follows. E3 ubiquitin-protein ligase which accepts ubiquitin from E2 ubiquitin-conjugating enzymes ube2l3 and ube2l6 in the form of a thioester and then directly transfers the ubiquitin to targeted substrates. This is Probable E3 ubiquitin-protein ligase RNF144A-A (rnf144aa) from Danio rerio (Zebrafish).